We begin with the raw amino-acid sequence, 259 residues long: Deoxyribose-phosphate aldolase (259 aa).

Catalysis depends on D102, which acts as the Proton donor/acceptor. Residue K167 is the Schiff-base intermediate with acetaldehyde of the active site. The active-site Proton donor/acceptor is K201.

The protein belongs to the DeoC/FbaB aldolase family. DeoC type 2 subfamily.

The protein resides in the cytoplasm. It carries out the reaction 2-deoxy-D-ribose 5-phosphate = D-glyceraldehyde 3-phosphate + acetaldehyde. The protein operates within carbohydrate degradation; 2-deoxy-D-ribose 1-phosphate degradation; D-glyceraldehyde 3-phosphate and acetaldehyde from 2-deoxy-alpha-D-ribose 1-phosphate: step 2/2. In terms of biological role, catalyzes a reversible aldol reaction between acetaldehyde and D-glyceraldehyde 3-phosphate to generate 2-deoxy-D-ribose 5-phosphate. The polypeptide is Deoxyribose-phosphate aldolase (Proteus mirabilis (strain HI4320)).